The sequence spans 262 residues: 3-dehydro-D-guloside 4-epimerase (262 aa).

Glu146 (proton donor/acceptor) is an active-site residue. Glu146 and Asp179 together coordinate Mn(2+). Position 182 (His182) interacts with substrate. Residue His205 participates in Mn(2+) binding. Arg211 contacts substrate. Catalysis depends on Glu240, which acts as the Proton donor/acceptor. A Mn(2+)-binding site is contributed by Glu240.

This sequence belongs to the hyi family. The cofactor is Mn(2+).

It carries out the reaction a 3-dehydro-D-guloside = a 3-dehydro-D-glucoside. Functionally, catalyzes the epimerization at C4 of 3-dehydro-D-gulosides leading to 3-dehydro-D-glucosides. Probably functions in a metabolic pathway that transforms D-gulosides to D-glucosides. Can use methyl alpha-3-dehydro-D-glucoside and methyl beta-3-dehydro-D-glucoside as substrates in vitro. However, the actual specific physiological substrates for this metabolic pathway are unknown. Cannot act on D-psicose, D-fructose, D-tagatose, D-sorbose, L-xylulose, or L-ribulose. The sequence is that of 3-dehydro-D-guloside 4-epimerase (ycjR) from Escherichia coli (strain K12).